A 527-amino-acid chain; its full sequence is Probable serine/threonine-protein kinase DDB_G0271538 (527 aa).

Over residues 1 to 10 (MNINFSKDDI) the composition is skewed to basic and acidic residues. Residues 1–24 (MNINFSKDDITGLPKSTKEEDEND) form a disordered region. A Protein kinase domain is found at 33–294 (LFMDVEIGRG…KIVVEGLKVL (262 aa)). Residues 39–47 (IGRGSFGQV) and lysine 60 contribute to the ATP site. Aspartate 156 serves as the catalytic Proton acceptor. 3 disordered regions span residues 304-375 (VKGK…ISGS), 422-452 (FTPP…DDVP), and 485-527 (TALD…KKKL). The segment covering 313 to 324 (DPDEDSFIDPND) has biased composition (acidic residues). The span at 325 to 359 (DSNNNNNSENNNNNNDNSNENNENNNENNNNSNEN) shows a compositional bias: low complexity. Acidic residues predominate over residues 440–452 (VDEDEDEDEDDVP). Residues 512–527 (PKKKPNNKNKKKKKKL) are compositionally biased toward basic residues.

The protein belongs to the protein kinase superfamily. TKL Ser/Thr protein kinase family.

The catalysed reaction is L-seryl-[protein] + ATP = O-phospho-L-seryl-[protein] + ADP + H(+). It catalyses the reaction L-threonyl-[protein] + ATP = O-phospho-L-threonyl-[protein] + ADP + H(+). This chain is Probable serine/threonine-protein kinase DDB_G0271538, found in Dictyostelium discoideum (Social amoeba).